Here is a 415-residue protein sequence, read N- to C-terminus: Transcription termination factor Rho (415 aa).

The Rho RNA-BD domain maps to 52–119 (ADIASGVLDI…TDVVRVNGRT (68 aa)). ATP is bound by residues 161 to 166 (GKGQRG), 173 to 178 (KTGKTV), and R204.

Belongs to the Rho family. As to quaternary structure, homohexamer. The homohexamer assembles into an open ring structure.

Facilitates transcription termination by a mechanism that involves Rho binding to the nascent RNA, activation of Rho's RNA-dependent ATPase activity, and release of the mRNA from the DNA template. The chain is Transcription termination factor Rho from Streptomyces coelicolor (strain ATCC BAA-471 / A3(2) / M145).